Reading from the N-terminus, the 214-residue chain is Large ribosomal subunit protein uL3 (214 aa).

Residues 133 to 155 (ATHGNSRSHRVPGSTGQCQSPGR) form a disordered region. Q151 is modified (N5-methylglutamine).

It belongs to the universal ribosomal protein uL3 family. In terms of assembly, part of the 50S ribosomal subunit. Forms a cluster with proteins L14 and L19. Methylated by PrmB.

One of the primary rRNA binding proteins, it binds directly near the 3'-end of the 23S rRNA, where it nucleates assembly of the 50S subunit. This chain is Large ribosomal subunit protein uL3, found in Cellvibrio japonicus (strain Ueda107) (Pseudomonas fluorescens subsp. cellulosa).